Reading from the N-terminus, the 423-residue chain is Pre-mRNA polyadenylation factor fip-1 (423 aa).

Residues 1-11 (MDIDEDEDFYA) show a composition bias toward acidic residues. 3 disordered regions span residues 1-178 (MDID…PVRT), 278-307 (GPGG…GGPG), and 360-423 (PGGG…GRRW). Positions 19–61 (PPTTAATTTTPATTTTTAAPTTTTTTTSTTTASAPPTTTSSST) are enriched in low complexity. Residues 65-90 (DELEEGEEEDEGGGAMDEDDDSDIDI) show a composition bias toward acidic residues. Low complexity predominate over residues 135 to 146 (GTNSNSNSSSNK). Residues 360 to 415 (PGGGPGGPGTGGMGPGGPGGQGGQGQQFGGGFGGNQGQGGYGGYDQMGGAGGGGRG) are compositionally biased toward gly residues.

It belongs to the FIP1 family.

It is found in the nucleus. Its function is as follows. Pre-mRNA polyadenylation factor that directly interacts with poly(A) polymerase. This Neurospora crassa (strain ATCC 24698 / 74-OR23-1A / CBS 708.71 / DSM 1257 / FGSC 987) protein is Pre-mRNA polyadenylation factor fip-1 (fip-1).